Here is a 234-residue protein sequence, read N- to C-terminus: NAD-reducing hydrogenase HoxS subunit gamma (234 aa).

The 2Fe-2S ferredoxin-type domain occupies 2-77; that stretch reads SIQITIDGKT…GLNVEVNDPE (76 aa). [2Fe-2S] cluster-binding residues include cysteine 35, cysteine 46, cysteine 49, and cysteine 61. Residues 77–116 form the 4Fe-4S His(Cys)3-ligated-type domain; the sequence is ELVDMRKALVEFLFAEGNHNCPSCEKSGRCQLQAVGYEVD. [4Fe-4S] cluster contacts are provided by histidine 95, cysteine 97, cysteine 100, cysteine 106, cysteine 145, cysteine 148, cysteine 151, and cysteine 198.

The protein belongs to the complex I 75 kDa subunit family. As to quaternary structure, tetramer of an alpha and a gamma subunits (flavin-containing dimer), and a delta and a nickel-containing beta subunits (hydrogenase dimer). [2Fe-2S] cluster is required as a cofactor. Requires [4Fe-4S] cluster as cofactor.

It localises to the cytoplasm. It catalyses the reaction H2 + NAD(+) = NADH + H(+). Its function is as follows. Subunits alpha and gamma of HoxS constitute an NADH--oxidoreductase. The protein is NAD-reducing hydrogenase HoxS subunit gamma (hoxU) of Cupriavidus necator (strain ATCC 17699 / DSM 428 / KCTC 22496 / NCIMB 10442 / H16 / Stanier 337) (Ralstonia eutropha).